The chain runs to 94 residues: Translation initiation factor 1A 2 (94 aa).

Positions 6–80 (GRRNLRMPSD…EKANIEWRYS (75 aa)) constitute an S1-like domain.

This sequence belongs to the eIF-1A family.

Its function is as follows. Seems to be required for maximal rate of protein biosynthesis. Enhances ribosome dissociation into subunits and stabilizes the binding of the initiator Met-tRNA(I) to 40 S ribosomal subunits. The protein is Translation initiation factor 1A 2 of Haloquadratum walsbyi (strain DSM 16790 / HBSQ001).